The chain runs to 106 residues: Putative cytochrome c oxidase subunit 7A3, mitochondrial (106 aa).

Residues methionine 1 to histidine 23 constitute a mitochondrion transit peptide.

This sequence belongs to the cytochrome c oxidase VIIa family.

Its subcellular location is the mitochondrion inner membrane. The polypeptide is Putative cytochrome c oxidase subunit 7A3, mitochondrial (COX7A2P2) (Homo sapiens (Human)).